Here is a 326-residue protein sequence, read N- to C-terminus: MNNTDIKLVSVVIPVYNEEASLPALLSRVTAACDQLSQNYEVILIDDGSHDGSTELIRDAAAVEGSKLVGVLLNRNYGQHAAIMAGFETAKGDLVITLDADLQNPPEEIPRLVEAAMQGYDVVGTMRRNRQDSWFRKTASKLINKSVQKATGVHMSDYGCMLRAYRRHIIDAMLCCQERSTFIPILANSFARRTIELEVGHAERAHGESKYGLMHLINLMYDLVTCMTTTPLRLLSIVGSVVAGIGFTFSILLILMRLILGADWAADGVFTLFAILFTFVGVQLLGMGLLGEYIGRMYTDVRARPRYFIHQIVRSATTPSQQEAEQ.

The next 2 membrane-spanning stretches (helical) occupy residues 234–254 (LLSIVGSVVAGIGFTFSILLI) and 269–289 (VFTLFAILFTFVGVQLLGMGL).

The protein belongs to the glycosyltransferase 2 family.

Its subcellular location is the cell inner membrane. The catalysed reaction is UDP-4-deoxy-4-formamido-beta-L-arabinose + di-trans,octa-cis-undecaprenyl phosphate = 4-deoxy-4-formamido-alpha-L-arabinopyranosyl di-trans,octa-cis-undecaprenyl phosphate + UDP. It participates in glycolipid biosynthesis; 4-amino-4-deoxy-alpha-L-arabinose undecaprenyl phosphate biosynthesis; 4-amino-4-deoxy-alpha-L-arabinose undecaprenyl phosphate from UDP-4-deoxy-4-formamido-beta-L-arabinose and undecaprenyl phosphate: step 1/2. Its pathway is bacterial outer membrane biogenesis; lipopolysaccharide biosynthesis. Its function is as follows. Catalyzes the transfer of 4-deoxy-4-formamido-L-arabinose from UDP to undecaprenyl phosphate. The modified arabinose is attached to lipid A and is required for resistance to polymyxin and cationic antimicrobial peptides. This is Undecaprenyl-phosphate 4-deoxy-4-formamido-L-arabinose transferase from Aeromonas hydrophila subsp. hydrophila (strain ATCC 7966 / DSM 30187 / BCRC 13018 / CCUG 14551 / JCM 1027 / KCTC 2358 / NCIMB 9240 / NCTC 8049).